Consider the following 220-residue polypeptide: LOB domain-containing protein 31 (220 aa).

The region spanning 10–112 (GPCGACKFLR…AELAYVQTQL (103 aa)) is the LOB domain. A disordered region spans residues 117 to 172 (GLPPPNSQNNSRTEAASSSNVPLISSVDSKDNMSSSSSHIPCMSQQQEQEQPKEAI). Over residues 123–139 (SQNNSRTEAASSSNVPL) the composition is skewed to polar residues.

This sequence belongs to the LOB domain-containing protein family. Expressed in roots, stems and flowers.

The sequence is that of LOB domain-containing protein 31 (LBD31) from Arabidopsis thaliana (Mouse-ear cress).